The following is a 1742-amino-acid chain: Meiosis regulator and mRNA stability factor 1 (1742 aa).

Phosphoserine is present on S65. The NYN domain maps to 351–488 (IGVFWDIENC…ALLHHANELI (138 aa)). Disordered regions lie at residues 620–642 (PSSA…TRNA) and 655–721 (SKTG…KEKE). The segment covering 631 to 642 (SQANSGSATRNA) has biased composition (polar residues). Over residues 673-689 (APPHRSSSAAAPAPKAP) the composition is skewed to low complexity. The residue at position 696 (Y696) is a Phosphotyrosine. Residue S757 is modified to Phosphoserine. The RRM domain occupies 788–867 (VDVQISNLDY…KKILVSLATG (80 aa)). HTH OST-type domains are found at residues 872–946 (SLSL…SPLG) and 1000–1077 (SLKT…HNKP). Phosphoserine occurs at positions 1089 and 1091. HTH OST-type domains are found at residues 1097-1171 (QLIQ…LTHR), 1173-1247 (QVKR…CIPR), 1257-1332 (RTKQ…TEVE), 1333-1408 (RFKA…INRK), 1409-1484 (SLRA…CVKL), and 1486-1560 (SLYL…LKND). S1571 carries the post-translational modification Phosphoserine. The tract at residues 1678 to 1729 (IRNENLPPDPSSPGVSAAVPAPPSPSSETPESLLSKDPTESPAKKQPKNRVK) is disordered. The segment covering 1703-1712 (SSETPESLLS) has biased composition (low complexity).

As to quaternary structure, interacts with LIMK2.

The protein localises to the peroxisome. Functionally, essential regulator of oogenesis required for female meiotic progression to repress transposable elements and preventing their mobilization, which is essential for the germline integrity. Probably acts via some RNA metabolic process, equivalent to the piRNA system in males, which mediates the repression of transposable elements during meiosis by forming complexes composed of RNAs and governs the methylation and subsequent repression of transposons. Also required to protect from DNA double-strand breaks. The polypeptide is Meiosis regulator and mRNA stability factor 1 (Bos taurus (Bovine)).